The chain runs to 396 residues: Protein PIN-LIKES 5 (396 aa).

Residues 1–5 lie on the Lumenal side of the membrane; that stretch reads MGFWS. The chain crosses the membrane as a helical span at residues 6–26; sequence LLEVASMPVIQVLFMSLVGAF. At 27–45 the chain is on the cytoplasmic side; it reads MASDRCKLFPVEARNSMNK. A helical transmembrane segment spans residues 46–66; the sequence is VVFVLFAPALMFANLAQTVTL. Over 67–73 the chain is Lumenal; sequence EDIISWW. Residues 74–94 form a helical membrane-spanning segment; sequence FMPVNMGLTFLIGGLLGWLVV. Over 95–106 the chain is Cytoplasmic; the sequence is KILKPPPYLEGL. Residues 107–127 traverse the membrane as a helical segment; sequence IVATCSAGNMGNLPIILVPAI. Topologically, residues 128–144 are lumenal; that stretch reads CDEDKSPFGNRSVCRTV. Residues 145–165 form a helical membrane-spanning segment; it reads GLSYASFSMALGGFYIWTYTF. Over 166–229 the chain is Cytoplasmic; sequence RLIKGSAMKV…WRKGVDFLHE (64 aa). Residues 230 to 250 form a helical membrane-spanning segment; the sequence is ILEELLAPPTLGAIIGFIFGA. Residues 251–273 lie on the Lumenal side of the membrane; that stretch reads VRWLRNLIIGDDAPLRIVQSTAK. A helical transmembrane segment spans residues 274 to 294; the sequence is LLGDGTIPCMTIILGGNLIQG. The Cytoplasmic portion of the chain corresponds to 295-312; the sequence is LRSSAVKPMVVLGIVCVR. The helical transmembrane segment at 313-333 threads the bilayer; it reads YIAMPIIGIGIVLTAANLGFL. Residues 334-337 are Lumenal-facing; it reads PADP. Residues 338–358 form a helical membrane-spanning segment; sequence LFQYVLMLQFTLPPAMNIGTM. The Cytoplasmic portion of the chain corresponds to 359-370; that stretch reads TQLYNVAQDECS. Residues 371 to 391 form a helical membrane-spanning segment; the sequence is VLMLWTYLVAILALTVWSTIF. Residues 392–396 lie on the Lumenal side of the membrane; that stretch reads LHLLV.

Belongs to the auxin efflux carrier (TC 2.A.69.2) family. Expressed in seedlings, cauline leaves and flowers.

Its subcellular location is the endoplasmic reticulum membrane. Functionally, involved in cellular auxin homeostasis by regulating auxin metabolism. Regulates intracellular auxin accumulation at the endoplasmic reticulum and thus auxin availability for nuclear auxin signaling. The protein is Protein PIN-LIKES 5 of Arabidopsis thaliana (Mouse-ear cress).